A 209-amino-acid polypeptide reads, in one-letter code: dITP/XTP pyrophosphatase (209 aa).

7–12 (SSHGYK) provides a ligand contact to substrate. Residue Asp70 is the Proton acceptor of the active site. Residue Asp70 coordinates Mg(2+). Residues Ser71, 154 to 157 (FGYD), Lys177, and 182 to 183 (HR) contribute to the substrate site.

This sequence belongs to the HAM1 NTPase family. Homodimer. Mg(2+) is required as a cofactor.

It carries out the reaction XTP + H2O = XMP + diphosphate + H(+). The catalysed reaction is dITP + H2O = dIMP + diphosphate + H(+). The enzyme catalyses ITP + H2O = IMP + diphosphate + H(+). Pyrophosphatase that catalyzes the hydrolysis of nucleoside triphosphates to their monophosphate derivatives, with a high preference for the non-canonical purine nucleotides XTP (xanthosine triphosphate), dITP (deoxyinosine triphosphate) and ITP. Seems to function as a house-cleaning enzyme that removes non-canonical purine nucleotides from the nucleotide pool, thus preventing their incorporation into DNA/RNA and avoiding chromosomal lesions. In Chlamydia trachomatis serovar L2 (strain ATCC VR-902B / DSM 19102 / 434/Bu), this protein is dITP/XTP pyrophosphatase.